Here is a 159-residue protein sequence, read N- to C-terminus: MNIQIVTVGKLKEKYLVQGIAEYLKRLSAYAKVTIVEVPDEKAPEVLSDAEMKQVKDKEGARILAKIPDDAHVIALAIDGKMKSSEEFAADLDKLATYGKSKVTFVIGGSLGLSEAVLKRSNERISFGRLTLPHQLMRLVLVEQVYRAFRIVRGEPYHK.

S-adenosyl-L-methionine contacts are provided by residues leucine 76, glycine 108, and 127–132 (FGRLTL).

It belongs to the RNA methyltransferase RlmH family. Homodimer.

It is found in the cytoplasm. The enzyme catalyses pseudouridine(1915) in 23S rRNA + S-adenosyl-L-methionine = N(3)-methylpseudouridine(1915) in 23S rRNA + S-adenosyl-L-homocysteine + H(+). In terms of biological role, specifically methylates the pseudouridine at position 1915 (m3Psi1915) in 23S rRNA. The polypeptide is Ribosomal RNA large subunit methyltransferase H (Listeria monocytogenes serotype 4b (strain CLIP80459)).